A 249-amino-acid chain; its full sequence is Deoxyribose-phosphate aldolase (249 aa).

The Proton donor/acceptor role is filled by aspartate 109. The active-site Schiff-base intermediate with acetaldehyde is lysine 171. Residue lysine 200 is the Proton donor/acceptor of the active site.

The protein belongs to the DeoC/FbaB aldolase family. DeoC type 1 subfamily.

It localises to the cytoplasm. It carries out the reaction 2-deoxy-D-ribose 5-phosphate = D-glyceraldehyde 3-phosphate + acetaldehyde. The protein operates within carbohydrate degradation; 2-deoxy-D-ribose 1-phosphate degradation; D-glyceraldehyde 3-phosphate and acetaldehyde from 2-deoxy-alpha-D-ribose 1-phosphate: step 2/2. Catalyzes a reversible aldol reaction between acetaldehyde and D-glyceraldehyde 3-phosphate to generate 2-deoxy-D-ribose 5-phosphate. The sequence is that of Deoxyribose-phosphate aldolase from Klebsiella pneumoniae subsp. pneumoniae (strain ATCC 700721 / MGH 78578).